A 381-amino-acid chain; its full sequence is S-adenosylmethionine synthase (381 aa).

ATP is bound at residue H15. D17 contacts Mg(2+). E43 contacts K(+). Residues E56 and Q99 each contribute to the L-methionine site. The segment at 99–109 (QSPDINQGVDR) is flexible loop. ATP contacts are provided by residues 164-166 (DAK), 230-231 (RF), D239, 245-246 (RK), A262, and K266. D239 serves as a coordination point for L-methionine. An L-methionine-binding site is contributed by K270.

It belongs to the AdoMet synthase family. As to quaternary structure, homotetramer; dimer of dimers. Mg(2+) serves as cofactor. Requires K(+) as cofactor.

It is found in the cytoplasm. The enzyme catalyses L-methionine + ATP + H2O = S-adenosyl-L-methionine + phosphate + diphosphate. The protein operates within amino-acid biosynthesis; S-adenosyl-L-methionine biosynthesis; S-adenosyl-L-methionine from L-methionine: step 1/1. Catalyzes the formation of S-adenosylmethionine (AdoMet) from methionine and ATP. The overall synthetic reaction is composed of two sequential steps, AdoMet formation and the subsequent tripolyphosphate hydrolysis which occurs prior to release of AdoMet from the enzyme. The sequence is that of S-adenosylmethionine synthase from Alteromonas mediterranea (strain DSM 17117 / CIP 110805 / LMG 28347 / Deep ecotype).